Consider the following 207-residue polypeptide: Acyl-homoserine-lactone synthase (207 aa).

It belongs to the autoinducer synthase family.

It carries out the reaction a fatty acyl-[ACP] + S-adenosyl-L-methionine = an N-acyl-L-homoserine lactone + S-methyl-5'-thioadenosine + holo-[ACP] + H(+). Its function is as follows. Required for the synthesis of N-butanoyl-L-homoserine lactone (BHL), an autoinducer molecule which binds to AhyR. This chain is Acyl-homoserine-lactone synthase (ahyI), found in Aeromonas hydrophila.